Consider the following 701-residue polypeptide: Rab-like protein 6 (701 aa).

The residue at position 1 (Met1) is an N-acetylmethionine. The small GTPase-like stretch occupies residues 39 to 279 (GVQYNMKIVI…IFLEMMEARS (241 aa)). Residues 50 to 57 (GDRNTGKT), 100 to 104 (DVVDK), and 177 to 179 (YRD) each bind GTP. The segment at 279–701 (SRGHASPLTT…LRGGGDYEAL (423 aa)) is disordered. Positions 284–315 (SPLTTSGQSPSSGSQSPVVPPSTVSTGSSSPS) are enriched in low complexity. Over residues 316–344 (TPQPVLQPPLQAPPAPPAPAEAPPLPAAP) the composition is skewed to pro residues. Phosphoserine occurs at positions 394, 416, 418, 461, and 462. The segment covering 495-506 (ALGPPRDAAPRA) has biased composition (low complexity). Ser552 is subject to Phosphoserine. Basic and acidic residues predominate over residues 555–569 (DAQRRAGEFPVREDL). Residue Ser570 is modified to Phosphoserine. Thr573 carries the phosphothreonine modification. The span at 580–589 (VQPPAPPKPL) shows a compositional bias: pro residues. The span at 608 to 626 (EPGREDSSEQDKEGRPPAK) shows a compositional bias: basic and acidic residues. Phosphoserine occurs at positions 614 and 615. Positions 629–667 (KKKKKKGREEEDKAAKKRSKHKKSRERADDKGRDERRRR) are interaction with CDKN2A. The segment covering 643–653 (AKKRSKHKKSR) has biased composition (basic residues). Over residues 654 to 665 (ERADDKGRDERR) the composition is skewed to basic and acidic residues. Residues 683-701 (LGGGAPSGPLRGGGDYEAL) are compositionally biased toward gly residues.

The protein belongs to the small GTPase superfamily. Rab family.

It localises to the nucleus. Its subcellular location is the cytoplasm. Its function is as follows. May enhance cellular proliferation. May reduce growth inhibitory activity of CDKN2A. The polypeptide is Rab-like protein 6 (RABL6) (Bos taurus (Bovine)).